Reading from the N-terminus, the 776-residue chain is Reticulon-1 (776 aa).

4 disordered regions span residues 1-101 (MAAP…KDGE), 137-168 (SESPEELGTPGPSLPDVPGIESRGLFSSDSGI), 205-245 (VKHQ…PAPV), and 285-580 (LTEI…APPP). S327 is subject to Phosphoserine. Over residues 328–341 (PGSITPPSSGTEPS) the composition is skewed to low complexity. Phosphoserine occurs at positions 350, 352, and 487. A compositionally biased stretch (basic and acidic residues) spans 497 to 511 (AIREETGVRAEERAP). The region spanning 589-776 (AIDLLYWRDI…KIPGAKRHAE (188 aa)) is the Reticulon domain. A run of 2 helical transmembrane segments spans residues 603–623 (IVFGSFLLLLFSLTQFSVVSV) and 705–725 (FAVLMWLLTYVGALFNGLTLL).

Interacts with NDRG1. Interacts with BACE1. In terms of assembly, interacts with TMEM33. As to quaternary structure, interacts with UGCG; regulates the ceramide glucosyltransferase activity of UGCG. Isoforms RTN1-A and RTN1-B are phosphorylated. In terms of tissue distribution, expressed in neural and neuroendocrine tissues and cell cultures derived therefrom. Expression of isoform RTN1-C is strongly correlated with neuronal differentiation.

Its subcellular location is the endoplasmic reticulum membrane. The protein resides in the golgi apparatus membrane. In terms of biological role, inhibits amyloid precursor protein processing, probably by blocking BACE1 activity. The chain is Reticulon-1 (RTN1) from Homo sapiens (Human).